The sequence spans 187 residues: Elongation factor P 1 (187 aa).

The protein belongs to the elongation factor P family.

The protein localises to the cytoplasm. It functions in the pathway protein biosynthesis; polypeptide chain elongation. Its function is as follows. Involved in peptide bond synthesis. Stimulates efficient translation and peptide-bond synthesis on native or reconstituted 70S ribosomes in vitro. Probably functions indirectly by altering the affinity of the ribosome for aminoacyl-tRNA, thus increasing their reactivity as acceptors for peptidyl transferase. The polypeptide is Elongation factor P 1 (Geobacter sulfurreducens (strain ATCC 51573 / DSM 12127 / PCA)).